The chain runs to 460 residues: Sexual development regulator velC (460 aa).

Disordered regions lie at residues 67 to 131, 152 to 216, and 422 to 460; these read VGPD…PQAP, YAPR…RPDP, and KKGN…SARQ. Residues 192–207 show a composition bias toward polar residues; sequence PVTTNGRPPDSNSPMV. The Velvet domain occupies 239–422; that stretch reads LSDNRFNLQI…KEQGCIISIK (184 aa). Residues 423–437 show a composition bias toward basic and acidic residues; sequence KGNDRSKNTRSHDDS. Residues 451 to 460 are compositionally biased toward basic residues; that stretch reads GKRRRRSARQ.

This sequence belongs to the velvet family. VelC subfamily. In terms of assembly, interacts with VE1.

The protein localises to the nucleus. Velvet-domain-containing protein that acts as a positive regulator of sexual development. Dispensable for regulation of conidial size, hyphal hydrophobicity, fumonisin production, and oxidant resistance. The chain is Sexual development regulator velC from Gibberella moniliformis (strain M3125 / FGSC 7600) (Maize ear and stalk rot fungus).